Consider the following 92-residue polypeptide: uncharacterized protein (92 aa).

The N-terminal stretch at 1–23 (MNPAIVVIIVLLVAALLIWACKA) is a signal peptide.

This is an uncharacterized protein from Acheta domesticus (House cricket).